The following is a 57-amino-acid chain: MLKVKLVRSMIGCNPKQRATIKALGLRKIRQEKSFEDTPIVRGMIKKVEHLVEVSES.

This sequence belongs to the universal ribosomal protein uL30 family. In terms of assembly, part of the 50S ribosomal subunit.

This chain is Large ribosomal subunit protein uL30, found in Maridesulfovibrio salexigens (strain ATCC 14822 / DSM 2638 / NCIMB 8403 / VKM B-1763) (Desulfovibrio salexigens).